The chain runs to 240 residues: Sugar fermentation stimulation protein homolog (240 aa).

The protein belongs to the SfsA family.

The sequence is that of Sugar fermentation stimulation protein homolog from Natranaerobius thermophilus (strain ATCC BAA-1301 / DSM 18059 / JW/NM-WN-LF).